The following is a 103-amino-acid chain: Cystatin-A (103 aa).

M1 is subject to N-acetylmethionine. The short motif at 52–56 is the Secondary area of contact element; the sequence is QVVAG.

This sequence belongs to the cystatin family.

The protein resides in the cytoplasm. Its function is as follows. This is an intracellular thiol proteinase inhibitor. The polypeptide is Cystatin-A (Csta) (Rattus norvegicus (Rat)).